The following is a 40-amino-acid chain: Cytolysin SmT-1 (40 aa).

The plays an important role in the hemolytic activity stretch occupies residues 3-12 (ALAGTIIAGA). An N-terminal region region spans residues 11–30 (GASLGFQILDKVLGELGKVS).

It belongs to the actinoporin family. Sea anemone subfamily. Octamer or nonamer in membranes. Monomer in the soluble state.

It localises to the secreted. Its subcellular location is the nematocyst. It is found in the target cell membrane. Pore-forming protein that forms cations-selective hydrophilic pores of around 1 nm and causes cardiac stimulation and cytolysis. Pore formation is a multi-step process that involves specific recognition of membrane sphingomyelin (but neither cholesterol nor phosphatidylcholine) using aromatic rich region and adjacent phosphocholine (POC) binding site, firm binding to the membrane (mainly driven by hydrophobic interactions) accompanied by the transfer of the N-terminal region to the lipid-water interface and finally pore formation after oligomerization of monomers. This toxin shows hemolytic activities. In Stichodactyla mertensii (Merten's carpet sea anemone), this protein is Cytolysin SmT-1.